Reading from the N-terminus, the 306-residue chain is uncharacterized protein (306 aa).

Helical transmembrane passes span 6–26 (VQIM…FPGI), 37–57 (HLAL…AVLT), 67–87 (IPAI…LLNI), 91–111 (TVSA…SAML), 125–145 (WLGS…AGDF), 148–168 (SMSG…YFVF), 177–197 (GFIP…LVFL), 213–233 (LSIV…LAYV), and 251–271 (ALAL…LSLL). 2 consecutive EamA domains span residues 17–140 (GLWA…LIAF) and 160–285 (FSES…FTYL).

The protein belongs to the EamA transporter family.

Its subcellular location is the cell membrane. This is an uncharacterized protein from Bacillus subtilis (strain 168).